A 131-amino-acid chain; its full sequence is Small ribosomal subunit protein eS8 (131 aa).

Residues 1 to 38 (MKLGAYYKGGDLKKPSGGKKRKVRRTKKKALGGGPPQI) form a disordered region. Positions 16–30 (SGGKKRKVRRTKKKA) are enriched in basic residues.

This sequence belongs to the eukaryotic ribosomal protein eS8 family. As to quaternary structure, part of the 30S ribosomal subunit.

This is Small ribosomal subunit protein eS8 from Pyrobaculum arsenaticum (strain DSM 13514 / JCM 11321 / PZ6).